The chain runs to 342 residues: L-threonine 3-dehydrogenase (342 aa).

Position 38 (Cys38) interacts with Zn(2+). Residues Thr40 and His43 each act as charge relay system in the active site. Zn(2+)-binding residues include His63, Glu64, Cys93, Cys96, Cys99, and Cys107. NAD(+) contacts are provided by residues Ile175, Asp195, Arg200, 262-264 (LGI), and 286-287 (IY).

The protein belongs to the zinc-containing alcohol dehydrogenase family. Homotetramer. Zn(2+) is required as a cofactor.

The protein resides in the cytoplasm. The enzyme catalyses L-threonine + NAD(+) = (2S)-2-amino-3-oxobutanoate + NADH + H(+). It participates in amino-acid degradation; L-threonine degradation via oxydo-reductase pathway; glycine from L-threonine: step 1/2. Its function is as follows. Catalyzes the NAD(+)-dependent oxidation of L-threonine to 2-amino-3-ketobutyrate. The sequence is that of L-threonine 3-dehydrogenase from Burkholderia cenocepacia (strain ATCC BAA-245 / DSM 16553 / LMG 16656 / NCTC 13227 / J2315 / CF5610) (Burkholderia cepacia (strain J2315)).